The sequence spans 347 residues: Ketol-acid reductoisomerase (NADP(+)) (347 aa).

Residues 3–182 (TKMFYDKDID…GSGRAGILET (180 aa)) enclose the KARI N-terminal Rossmann domain. NADP(+) is bound by residues 26 to 29 (YGAQ), Arg-49, Ser-53, and 83 to 86 (DELQ). Residue His-108 is part of the active site. Gly-134 is a binding site for NADP(+). One can recognise a KARI C-terminal knotted domain in the interval 183–328 (TFEEETTEDL…KKVRAMMPWI (146 aa)). Residues Asp-191, Glu-195, Glu-227, and Glu-231 each coordinate Mg(2+). Ser-252 contributes to the substrate binding site.

It belongs to the ketol-acid reductoisomerase family. It depends on Mg(2+) as a cofactor.

The enzyme catalyses (2R)-2,3-dihydroxy-3-methylbutanoate + NADP(+) = (2S)-2-acetolactate + NADPH + H(+). It catalyses the reaction (2R,3R)-2,3-dihydroxy-3-methylpentanoate + NADP(+) = (S)-2-ethyl-2-hydroxy-3-oxobutanoate + NADPH + H(+). It functions in the pathway amino-acid biosynthesis; L-isoleucine biosynthesis; L-isoleucine from 2-oxobutanoate: step 2/4. It participates in amino-acid biosynthesis; L-valine biosynthesis; L-valine from pyruvate: step 2/4. Its function is as follows. Involved in the biosynthesis of branched-chain amino acids (BCAA). Catalyzes an alkyl-migration followed by a ketol-acid reduction of (S)-2-acetolactate (S2AL) to yield (R)-2,3-dihydroxy-isovalerate. In the isomerase reaction, S2AL is rearranged via a Mg-dependent methyl migration to produce 3-hydroxy-3-methyl-2-ketobutyrate (HMKB). In the reductase reaction, this 2-ketoacid undergoes a metal-dependent reduction by NADPH to yield (R)-2,3-dihydroxy-isovalerate. The polypeptide is Ketol-acid reductoisomerase (NADP(+)) (Leuconostoc mesenteroides subsp. mesenteroides (strain ATCC 8293 / DSM 20343 / BCRC 11652 / CCM 1803 / JCM 6124 / NCDO 523 / NBRC 100496 / NCIMB 8023 / NCTC 12954 / NRRL B-1118 / 37Y)).